The sequence spans 186 residues: MTNTFFLAAETLPLEEPINPLIPPLYDIVWSIIPFAVILFVFAKVVLPKFQEVLTQREDKIEGGIQRAEAAKAEAQEALEKYNKQLAEARTEAAQIRDDARSQGQKIIADMKTQATEESNRIVEAGNKQLEANRASVVADLRKEMGENSINLAERLLGEQLNDDVKRSGTIDNFLAGLDNVGTAGK.

Residues 28-48 traverse the membrane as a helical segment; the sequence is IVWSIIPFAVILFVFAKVVLP.

This sequence belongs to the ATPase B chain family. F-type ATPases have 2 components, F(1) - the catalytic core - and F(0) - the membrane proton channel. F(1) has five subunits: alpha(3), beta(3), gamma(1), delta(1), epsilon(1). F(0) has three main subunits: a(1), b(2) and c(10-14). The alpha and beta chains form an alternating ring which encloses part of the gamma chain. F(1) is attached to F(0) by a central stalk formed by the gamma and epsilon chains, while a peripheral stalk is formed by the delta and b chains.

Its subcellular location is the cell membrane. Its function is as follows. F(1)F(0) ATP synthase produces ATP from ADP in the presence of a proton or sodium gradient. F-type ATPases consist of two structural domains, F(1) containing the extramembraneous catalytic core and F(0) containing the membrane proton channel, linked together by a central stalk and a peripheral stalk. During catalysis, ATP synthesis in the catalytic domain of F(1) is coupled via a rotary mechanism of the central stalk subunits to proton translocation. In terms of biological role, component of the F(0) channel, it forms part of the peripheral stalk, linking F(1) to F(0). This Corynebacterium urealyticum (strain ATCC 43042 / DSM 7109) protein is ATP synthase subunit b.